Reading from the N-terminus, the 288-residue chain is Alpha/beta hydrolase domain-containing protein 17B (288 aa).

Catalysis depends on charge relay system residues Ser170, Asp235, and His264.

Belongs to the AB hydrolase superfamily. ABHD17 family. Palmitoylated on cysteine residues located in a cysteine cluster at the N-terminus which promotes membrane localization.

Its subcellular location is the cell membrane. It is found in the recycling endosome membrane. It localises to the cell projection. The protein resides in the dendritic spine. The protein localises to the postsynaptic density membrane. The catalysed reaction is S-hexadecanoyl-L-cysteinyl-[protein] + H2O = L-cysteinyl-[protein] + hexadecanoate + H(+). Functionally, hydrolyzes fatty acids from S-acylated cysteine residues in proteins. Has depalmitoylating activity towards nras. The chain is Alpha/beta hydrolase domain-containing protein 17B from Xenopus laevis (African clawed frog).